A 277-amino-acid chain; its full sequence is Large ribosomal subunit protein uL2 (277 aa).

2 disordered regions span residues 32 to 58 and 225 to 277; these read KSLTKGKKLKSGRDSSGRISIRRRGGG and VAMN…RRNK. A compositionally biased stretch (basic residues) spans 258-277; it reads YKTRKKKRYSDKFIIKRRNK.

The protein belongs to the universal ribosomal protein uL2 family. Part of the 50S ribosomal subunit. Forms a bridge to the 30S subunit in the 70S ribosome.

One of the primary rRNA binding proteins. Required for association of the 30S and 50S subunits to form the 70S ribosome, for tRNA binding and peptide bond formation. It has been suggested to have peptidyltransferase activity; this is somewhat controversial. Makes several contacts with the 16S rRNA in the 70S ribosome. The chain is Large ribosomal subunit protein uL2 from Borrelia garinii subsp. bavariensis (strain ATCC BAA-2496 / DSM 23469 / PBi) (Borreliella bavariensis).